The following is a 550-amino-acid chain: Chaperonin GroEL 2 (550 aa).

ATP-binding positions include 30–33 (TLGP), Lys51, 87–91 (DGTTT), Gly415, 480–482 (NAA), and Asp496.

The protein belongs to the chaperonin (HSP60) family. In terms of assembly, forms a cylinder of 14 subunits composed of two heptameric rings stacked back-to-back. Interacts with the co-chaperonin GroES.

It localises to the cytoplasm. It catalyses the reaction ATP + H2O + a folded polypeptide = ADP + phosphate + an unfolded polypeptide.. Its function is as follows. Together with its co-chaperonin GroES, plays an essential role in assisting protein folding. The GroEL-GroES system forms a nano-cage that allows encapsulation of the non-native substrate proteins and provides a physical environment optimized to promote and accelerate protein folding. This chain is Chaperonin GroEL 2, found in Erythrobacter litoralis (strain HTCC2594).